The following is a 248-amino-acid chain: UPF0246 protein A1I_02510 (248 aa).

Belongs to the UPF0246 family.

This is UPF0246 protein A1I_02510 from Rickettsia bellii (strain OSU 85-389).